The primary structure comprises 204 residues: Inositol diphosphatase DSP2 (204 aa).

A disordered region spans residues M1 to E27. A compositionally biased stretch (basic and acidic residues) spans Q13–E27. Residues N51–Q203 enclose the Tyrosine-protein phosphatase domain. A WPD loop important for active site topology region spans residues F107–I119. 1D-myo-inositol hexakisphosphate-binding residues include N118, I119, and K123. C143 acts as the Phosphocysteine intermediate in catalysis.

It belongs to the protein-tyrosine phosphatase family. Atypical dual-specificity phosphatase Siw14-like subfamily. Expressed in roots and young panicles.

It is found in the cytoplasm. It localises to the nucleus. The catalysed reaction is 5-diphospho-1D-myo-inositol 1,2,3,4,6-pentakisphosphate + H2O = 1D-myo-inositol hexakisphosphate + phosphate + H(+). It catalyses the reaction 1,5-bis(diphospho)-1D-myo-inositol 2,3,4,6-tetrakisphosphate + H2O = 1-diphospho-1D-myo-inositol 2,3,4,5,6-pentakisphosphate + phosphate + 2 H(+). The enzyme catalyses 3,5-bis(diphospho)-1D-myo-inositol 1,2,4,6-tetrakisphosphate + H2O = 3-diphospho-1D-myo-inositol 1,2,4,5,6-pentakisphosphate + phosphate + 2 H(+). It carries out the reaction 6-diphospho-1D-myo-inositol pentakisphosphate + H2O = 1D-myo-inositol hexakisphosphate + phosphate + H(+). In terms of biological role, cleaves the beta-phosphate at the 5-position of soluble inositol pyrophosphates. Has highest activity on 5-diphosphoinositol 1,2,3,4,6-pentakisphosphate (5-InsP(7)). Acts as a negative regulator of defense responses against the fungal pathogen Magnaporthe oryzae. The sequence is that of Inositol diphosphatase DSP2 from Oryza sativa subsp. japonica (Rice).